Reading from the N-terminus, the 98-residue chain is Histone H4-1 (98 aa).

Gly residues predominate over residues 1 to 14 (MGGKGGKGGKGLGK). Residues 1 to 20 (MGGKGGKGGKGLGKVGAKKR) form a disordered region.

The protein belongs to the histone H4 family. The nucleosome is a histone octamer containing two molecules each of H2A, H2B, H3 and H4 assembled in one H3-H4 heterotetramer and two H2A-H2B heterodimers. The octamer wraps approximately 147 bp of DNA.

It is found in the nucleus. The protein resides in the chromosome. In terms of biological role, core component of nucleosome. Nucleosomes wrap and compact DNA into chromatin, limiting DNA accessibility to the cellular machineries which require DNA as a template. Histones thereby play a central role in transcription regulation, DNA repair, DNA replication and chromosomal stability. DNA accessibility is regulated via a complex set of post-translational modifications of histones, also called histone code, and nucleosome remodeling. This Blepharisma japonicum protein is Histone H4-1.